A 201-amino-acid chain; its full sequence is Holliday junction branch migration complex subunit RuvA (201 aa).

A domain I region spans residues 1–63 (MIAYIKGTLN…EDAQILFGFQ (63 aa)). A domain II region spans residues 64-142 (NRDEKYLFTK…SVFSITDEQQ (79 aa)). A flexible linker region spans residues 143 to 149 (KSSVSNV). Positions 150-201 (NNNEVYSEAMEALKALGYTDKEVKQVLPHLKKDNDALSVDEAIRKALALLAK) are domain III.

Belongs to the RuvA family. In terms of assembly, homotetramer. Forms an RuvA(8)-RuvB(12)-Holliday junction (HJ) complex. HJ DNA is sandwiched between 2 RuvA tetramers; dsDNA enters through RuvA and exits via RuvB. An RuvB hexamer assembles on each DNA strand where it exits the tetramer. Each RuvB hexamer is contacted by two RuvA subunits (via domain III) on 2 adjacent RuvB subunits; this complex drives branch migration. In the full resolvosome a probable DNA-RuvA(4)-RuvB(12)-RuvC(2) complex forms which resolves the HJ.

It localises to the cytoplasm. Its function is as follows. The RuvA-RuvB-RuvC complex processes Holliday junction (HJ) DNA during genetic recombination and DNA repair, while the RuvA-RuvB complex plays an important role in the rescue of blocked DNA replication forks via replication fork reversal (RFR). RuvA specifically binds to HJ cruciform DNA, conferring on it an open structure. The RuvB hexamer acts as an ATP-dependent pump, pulling dsDNA into and through the RuvAB complex. HJ branch migration allows RuvC to scan DNA until it finds its consensus sequence, where it cleaves and resolves the cruciform DNA. In Oceanobacillus iheyensis (strain DSM 14371 / CIP 107618 / JCM 11309 / KCTC 3954 / HTE831), this protein is Holliday junction branch migration complex subunit RuvA.